Here is a 509-residue protein sequence, read N- to C-terminus: MVLETLNPLHYNITSLVPDTMPVATVPILILMCFLFLIWNHEETSSIPGPGYCMGIGPLISHGRFLWMGVGNACNYYNKTYGDFVRVWISGEETFIISKSSSVSHVMKHWHYVSRFGSKLGLQCIGMYENGIIFNNNPAHWKEIRPFFTKALSGPGLVRMIAICVESTTEHLDRLQEVTTELGNINALNLMRRIMLDTSNKLFLGVPLDENAIVLKIQNYFDAWQALLLKPDIFFKISWLCKKYKDAVKDLKGAMEILIEQKRQKLSTVEKLDEHMDFASQLIFAQNRGDLTAENVNQCVLEMMIAAPDTLSVTLFFMLILIAEHPTVEEEMMREIETVVGDRDIQSDDMPNLKIVENFIYESMRYQPVVDLIMRKALQDDVIDGYPVKKGTNIILNIGRMHKLEFFPKPNEFSLENFEKNVPSRYFQPFGFGPRSCVGKFIAMVMMKAILVTLLRRCRVQTMKGRGLNNIQKNNDLSMHPIERQPLLEMVFTPRRNANENQGDGMDQH.

Cysteine 437 contributes to the heme binding site.

The protein belongs to the cytochrome P450 family. It depends on heme as a cofactor.

Its subcellular location is the membrane. The catalysed reaction is testosterone + 3 reduced [NADPH--hemoprotein reductase] + 3 O2 = 17beta-estradiol + formate + 3 oxidized [NADPH--hemoprotein reductase] + 4 H2O + 4 H(+). It catalyses the reaction androst-4-ene-3,17-dione + 3 reduced [NADPH--hemoprotein reductase] + 3 O2 = estrone + formate + 3 oxidized [NADPH--hemoprotein reductase] + 4 H2O + 4 H(+). Functionally, catalyzes the formation of aromatic C18 estrogens from C19 androgens. This Taeniopygia guttata (Zebra finch) protein is Aromatase (CYP19A1).